The following is a 596-amino-acid chain: Beta-fructofuranosidase, insoluble isoenzyme 7 (596 aa).

An N-terminal signal peptide occupies residues 1 to 24 (MARLGLAVCAASFHLFLLLASTSS). Substrate is bound by residues 51 to 54 (WQND), Gln70, and Trp78. Residue Asp54 is part of the active site. Asn82 carries an N-linked (GlcNAc...) asparagine glycan. Substrate-binding positions include 115 to 116 (WS), 179 to 180 (RD), and Glu234. Residue Asn330 is glycosylated (N-linked (GlcNAc...) asparagine). The cysteines at positions 432 and 478 are disulfide-linked. A glycan (N-linked (GlcNAc...) asparagine) is linked at Asn552.

Belongs to the glycosyl hydrolase 32 family. Expressed in roots, leaves and flowers. Weakly expressed in seeds.

Its subcellular location is the secreted. It is found in the extracellular space. It localises to the apoplast. The protein localises to the cell wall. The catalysed reaction is Hydrolysis of terminal non-reducing beta-D-fructofuranoside residues in beta-D-fructofuranosides.. In terms of biological role, may play a role in sucrose partitioning during seed development. The chain is Beta-fructofuranosidase, insoluble isoenzyme 7 (CIN7) from Oryza sativa subsp. japonica (Rice).